Reading from the N-terminus, the 346-residue chain is Histidinol-phosphate aminotransferase (346 aa).

An N6-(pyridoxal phosphate)lysine modification is found at Lys209.

The protein belongs to the class-II pyridoxal-phosphate-dependent aminotransferase family. Histidinol-phosphate aminotransferase subfamily. Homodimer. The cofactor is pyridoxal 5'-phosphate.

The catalysed reaction is L-histidinol phosphate + 2-oxoglutarate = 3-(imidazol-4-yl)-2-oxopropyl phosphate + L-glutamate. It participates in amino-acid biosynthesis; L-histidine biosynthesis; L-histidine from 5-phospho-alpha-D-ribose 1-diphosphate: step 7/9. The polypeptide is Histidinol-phosphate aminotransferase (Aliivibrio fischeri (strain MJ11) (Vibrio fischeri)).